Consider the following 1171-residue polypeptide: MSLRFVIGRAGSGKSTLCLHEVQEELKQRPRGETILYLVPEQMTFQTQQALIGSEDVRGSIRAQVFSFSRLAWKVLQEVGGASRLHIDEAGVHMLLRKIVESRKDGLSVFQKAAEQNGFFEHLGSMIAEFKRYNVTPSNVYEMWQQLDAHSSSAEQKLLANKVYDLQLLYDDFERALIGKYLDSEDYLQLLVEKLPQSEYVKGAEVYIDGFHSFSPQELEIVRQLMICGARVTITLTIDEKTLAQPVNELDLFYETTLTYEKIKQVAREEKIEIEKTIPLMEQPRFHSPALAHLEMHYEARPNEKFHGEASVTIHTAANLRAEVEGVAREIRRLVAEENYRYRDIAVLLRNGESYYDVMRTLFTDYNIPHFIDEKRPMSHHPLVECIRSALEIISGNWRYDAVFRCVKTELLYPLDVRKETMREEMDEFENYCLAYGVQGKRWTSEDPWMYRRYRSLDDTNGMITDSEREMEEKINRLRDVVRTPVIRMQKRLKRAGTVMQMCEAVYLFLEELDVPKKLEALRIRAEENGDFLFATDHEQVWEEVMSLLDTFVEMLGEEKMSLSMFTDVMSTGLEALQFANIPPSLDQVLIANIDRSRLSNVKATFVIGVNEGVIPAAPMDEGMLSDEERDVLSAAGIELAPTTRQTLLEEQFVMYQMVTRATEKLYISCPLADEEGKTLLASSFIKKIKRMFPDVKDTFITNDVNDLSRLEQISYVATPEVTLSYVMQQLQTWKRYGFEGNLDFWWDVYNFYVTSDEWKQKSSRVLSSLFYRNRAQKLSTAVSRDLYGDKIKGSVSRMELFNRCAYAHFAQHGLSLRERDIFKLDAPDIGELFHAALKRIADRLLRENRTWADLSIKECEHLSAVVIEEIAPLLQRQILLSSNRHFYLKQKLQQIIFRTSIILREHAKSSGFVPVDLEVPFGMGGTGSLPPMEFSLPNGVKMEVVGRIDRVDKAEDENGTFLRIIDYKSSSKALDLTEVYYGLALQMLTYLDVVTSNAQTWMKKGGTASPAGVLYFHIHNPIVEVKGDASEAEIEKEILKKFKMKGLVLGDADVVRLMDNKLSTGSSDIISAGLKKDGSFSARSSIASEQEFNVLQKYVHHTFENIGKDITEGVIDIAPYKKGNKAACTFCNFKSVCQFDESLEDNQFRTLKDMKDSEAMEKIREEVGGE.

The UvrD-like helicase ATP-binding domain occupies 1 to 343 (MSLRFVIGRA…LVAEENYRYR (343 aa)). An ATP-binding site is contributed by 8–15 (GRAGSGKS). Residues 281-587 (MEQPRFHSPA…QFANIPPSLD (307 aa)) form the UvrD-like helicase C-terminal domain. [4Fe-4S] cluster contacts are provided by cysteine 805, cysteine 1129, cysteine 1132, and cysteine 1138.

It belongs to the helicase family. AddB/RexB type 1 subfamily. In terms of assembly, heterodimer of AddA and AddB. Mg(2+) is required as a cofactor. The cofactor is [4Fe-4S] cluster.

The heterodimer acts as both an ATP-dependent DNA helicase and an ATP-dependent, dual-direction single-stranded exonuclease. Recognizes the chi site generating a DNA molecule suitable for the initiation of homologous recombination. The AddB subunit has 5' -&gt; 3' nuclease activity but not helicase activity. This chain is ATP-dependent helicase/deoxyribonuclease subunit B, found in Bacillus anthracis.